We begin with the raw amino-acid sequence, 206 residues long: Large ribosomal subunit protein uL4 (206 aa).

Residues 48-97 (THAVKNRSLVSGGGKKPWKQKHTGRARQGSTRASQWVGGGKAMGPKPRDY) form a disordered region. Positions 63–72 (KPWKQKHTGR) are enriched in basic residues.

This sequence belongs to the universal ribosomal protein uL4 family. Part of the 50S ribosomal subunit.

One of the primary rRNA binding proteins, this protein initially binds near the 5'-end of the 23S rRNA. It is important during the early stages of 50S assembly. It makes multiple contacts with different domains of the 23S rRNA in the assembled 50S subunit and ribosome. In terms of biological role, forms part of the polypeptide exit tunnel. The protein is Large ribosomal subunit protein uL4 of Anaeromyxobacter sp. (strain K).